The following is a 494-amino-acid chain: Anthranilate synthase component 1 (494 aa).

Residues Ser-52 and 274–276 each bind L-tryptophan; that span reads PYM. Residue 309–310 participates in chorismate binding; sequence GT. Mg(2+) is bound at residue Glu-336. Residues Tyr-424, Arg-444, 458–460, and Gly-460 each bind chorismate; that span reads GAG. Glu-473 lines the Mg(2+) pocket.

This sequence belongs to the anthranilate synthase component I family. In terms of assembly, heterotetramer consisting of two non-identical subunits: a beta subunit (TrpG) and a large alpha subunit (TrpE). It depends on Mg(2+) as a cofactor.

It carries out the reaction chorismate + L-glutamine = anthranilate + pyruvate + L-glutamate + H(+). It functions in the pathway amino-acid biosynthesis; L-tryptophan biosynthesis; L-tryptophan from chorismate: step 1/5. With respect to regulation, feedback inhibited by tryptophan. Part of a heterotetrameric complex that catalyzes the two-step biosynthesis of anthranilate, an intermediate in the biosynthesis of L-tryptophan. In the first step, the glutamine-binding beta subunit (TrpG) of anthranilate synthase (AS) provides the glutamine amidotransferase activity which generates ammonia as a substrate that, along with chorismate, is used in the second step, catalyzed by the large alpha subunit of AS (TrpE) to produce anthranilate. In the absence of TrpG, TrpE can synthesize anthranilate directly from chorismate and high concentrations of ammonia. The protein is Anthranilate synthase component 1 (trpE) of Aquifex aeolicus (strain VF5).